We begin with the raw amino-acid sequence, 195 residues long: Thymidine kinase (195 aa).

Residues 9–16 (ATMNAGKS) and 89–92 (DEAQ) contribute to the ATP site. The active-site Proton acceptor is the glutamate 90. 4 residues coordinate Zn(2+): cysteine 147, cysteine 149, cysteine 184, and histidine 187.

The protein belongs to the thymidine kinase family. Homotetramer.

Its subcellular location is the cytoplasm. The catalysed reaction is thymidine + ATP = dTMP + ADP + H(+). In Rhizobium meliloti (strain 1021) (Ensifer meliloti), this protein is Thymidine kinase.